The sequence spans 341 residues: S-adenosylmethionine:tRNA ribosyltransferase-isomerase (341 aa).

The protein belongs to the QueA family. Monomer.

The protein localises to the cytoplasm. The enzyme catalyses 7-aminomethyl-7-carbaguanosine(34) in tRNA + S-adenosyl-L-methionine = epoxyqueuosine(34) in tRNA + adenine + L-methionine + 2 H(+). The protein operates within tRNA modification; tRNA-queuosine biosynthesis. In terms of biological role, transfers and isomerizes the ribose moiety from AdoMet to the 7-aminomethyl group of 7-deazaguanine (preQ1-tRNA) to give epoxyqueuosine (oQ-tRNA). This Desulforamulus reducens (strain ATCC BAA-1160 / DSM 100696 / MI-1) (Desulfotomaculum reducens) protein is S-adenosylmethionine:tRNA ribosyltransferase-isomerase.